The following is a 149-amino-acid chain: Active regulator of SIRT1 (149 aa).

The segment at 1 to 64 (MSVSLLRKGL…GLRHDQKATA (64 aa)) is disordered. Over residues 8-19 (KGLDLLREERSG) the composition is skewed to basic and acidic residues. Residues 30 to 41 (SSKPKPCLSSSK) are compositionally biased toward low complexity. Positions 43-52 (GMRKQLRRLK) are enriched in basic residues.

Belongs to the AROS family. Part of the small subunit (SSU) processome, composed of more than 70 proteins and the RNA chaperone small nucleolar RNA (snoRNA) U3.

Its subcellular location is the nucleus. It is found in the nucleolus. Its function is as follows. Part of the small subunit (SSU) processome, first precursor of the small eukaryotic ribosomal subunit. During the assembly of the SSU processome in the nucleolus, many ribosome biogenesis factors, an RNA chaperone and ribosomal proteins associate with the nascent pre-rRNA and work in concert to generate RNA folding, modifications, rearrangements and cleavage as well as targeted degradation of pre-ribosomal RNA by the RNA exosome. Acts as a chaperone that specifically mediates the integration of RPS19 in state post-A1. Direct regulator of SIRT1. The polypeptide is Active regulator of SIRT1 (rps19bp1) (Xenopus tropicalis (Western clawed frog)).